We begin with the raw amino-acid sequence, 151 residues long: Phosphopantetheine adenylyltransferase (151 aa).

Residue S9 participates in substrate binding. Residues 9–10 (SF) and H17 contribute to the ATP site. 3 residues coordinate substrate: K41, T73, and R87. ATP is bound by residues 88–90 (GLR), E98, and 122–128 (KAHISST).

The protein belongs to the bacterial CoaD family. As to quaternary structure, homohexamer. Requires Mg(2+) as cofactor.

The protein localises to the cytoplasm. It catalyses the reaction (R)-4'-phosphopantetheine + ATP + H(+) = 3'-dephospho-CoA + diphosphate. It functions in the pathway cofactor biosynthesis; coenzyme A biosynthesis; CoA from (R)-pantothenate: step 4/5. Functionally, reversibly transfers an adenylyl group from ATP to 4'-phosphopantetheine, yielding dephospho-CoA (dPCoA) and pyrophosphate. The chain is Phosphopantetheine adenylyltransferase from Christiangramia forsetii (strain DSM 17595 / CGMCC 1.15422 / KT0803) (Gramella forsetii).